Consider the following 350-residue polypeptide: tRNA uridine(34) hydroxylase (350 aa).

The 95-residue stretch at 146-240 (DDPDAVFIDM…YARRARAQGL (95 aa)) folds into the Rhodanese domain. Cys200 functions as the Cysteine persulfide intermediate in the catalytic mechanism. Positions 319–328 (RRRRAGRENG) are enriched in basic and acidic residues. Residues 319–350 (RRRRAGRENGNKIFNKSRGRLNSKLSIPDPAE) form a disordered region.

This sequence belongs to the TrhO family.

It catalyses the reaction uridine(34) in tRNA + AH2 + O2 = 5-hydroxyuridine(34) in tRNA + A + H2O. Functionally, catalyzes oxygen-dependent 5-hydroxyuridine (ho5U) modification at position 34 in tRNAs. This Salmonella paratyphi B (strain ATCC BAA-1250 / SPB7) protein is tRNA uridine(34) hydroxylase.